Consider the following 415-residue polypeptide: MAPVSGSRSPDREASGSGGRRRSSSKSPKPSKSARSPRGRRSRSHSCSRSGDRNGLTHQLGGLSQGSRNQSYRSRSRSRSRERPSAPRGIPFASASSSVYYGSYSRPYGSDKPWPSLLDKEREESLRQKRLSERERIGELGAPEVWGLSPKNPEPDSDEHTPVEDEEPKKSTTSASTSEEEKKKKSSRSKERSKKRRKKKSSKRKHKKYSEDSDSDSDSETDSSDEDNKRRAKKAKKKEKKKKHRSKKYKKKRSKKSRKESSDSSSKESQEEFLENPWKDRTKAEEPSDLIGPEAPKTLTSQDDKPLNYGHALLPGEGAAMAEYVKAGKRIPRRGEIGLTSEEIASFECSGYVMSGSRHRRMEAVRLRKENQIYSADEKRALASFNQEERRKRENKILASFREMVYRKTKGKDDK.

The disordered stretch occupies residues M1 to H311. S7 and S9 each carry phosphoserine. Over residues S25–A34 the composition is skewed to low complexity. The segment covering R35 to S46 has biased composition (basic residues). 2 positions are modified to phosphoserine: S50 and S64. Over residues A93–S110 the composition is skewed to low complexity. Position 112 is an N6-acetyllysine (K112). Residues L118–G138 are compositionally biased toward basic and acidic residues. S149 and S157 each carry phosphoserine. The segment covering D158–K170 has biased composition (basic and acidic residues). A Phosphothreonine modification is found at T161. Residues E179 to E272 are necessary for interaction with CIR1. Basic residues predominate over residues K184 to K208. Acidic residues predominate over residues D212 to D225. The span at R230–R258 shows a compositional bias: basic residues. 2 stretches are compositionally biased toward basic and acidic residues: residues K259 to Q270 and P277 to E286. The segment at F273–K415 is necessary for interaction with HDAC3 and transcriptional repression. Glycyl lysine isopeptide (Lys-Gly) (interchain with G-Cter in SUMO2) cross-links involve residues K283 and K305.

It belongs to the NKAP family. Component of the Notch corepressor complex. Interacts with CIR1 and HDAC3.

Its subcellular location is the nucleus. Functionally, acts as a transcriptional repressor. Plays a role as a transcriptional corepressor of the Notch-mediated signaling required for T-cell development. Also involved in the TNF and IL-1 induced NF-kappa-B activation. Associates with chromatin at the Notch-regulated SKP2 promoter. In Homo sapiens (Human), this protein is NF-kappa-B-activating protein (NKAP).